The following is a 207-amino-acid chain: ATP synthase subunit b (207 aa).

An N-terminal signal peptide occupies residues 1-27 (MKLRATFVFKTTLVALSFALFALFLVS). Cys-28 carries the N-palmitoyl cysteine lipid modification. The S-diacylglycerol cysteine moiety is linked to residue Cys-28. Residues 49-69 (WVFLAHLLAFVILLFLLLFLF) traverse the membrane as a helical segment.

It belongs to the ATPase B chain family. In terms of assembly, F-type ATPases have 2 components, F(1) - the catalytic core - and F(0) - the membrane proton channel. F(1) has five subunits: alpha(3), beta(3), gamma(1), delta(1), epsilon(1). F(0) has three main subunits: a(1), b(2) and c(10-14). The alpha and beta chains form an alternating ring which encloses part of the gamma chain. F(1) is attached to F(0) by a central stalk formed by the gamma and epsilon chains, while a peripheral stalk is formed by the delta and b chains.

The protein localises to the cell membrane. F(1)F(0) ATP synthase produces ATP from ADP in the presence of a proton or sodium gradient. F-type ATPases consist of two structural domains, F(1) containing the extramembraneous catalytic core and F(0) containing the membrane proton channel, linked together by a central stalk and a peripheral stalk. During catalysis, ATP synthesis in the catalytic domain of F(1) is coupled via a rotary mechanism of the central stalk subunits to proton translocation. Its function is as follows. Component of the F(0) channel, it forms part of the peripheral stalk, linking F(1) to F(0). The chain is ATP synthase subunit b from Mycoplasma pneumoniae (strain ATCC 29342 / M129 / Subtype 1) (Mycoplasmoides pneumoniae).